The sequence spans 238 residues: Ribosomal RNA small subunit methyltransferase G (238 aa).

Residues glycine 77, phenylalanine 82, 128–129 (AE), and arginine 147 contribute to the S-adenosyl-L-methionine site.

The protein belongs to the methyltransferase superfamily. RNA methyltransferase RsmG family.

The protein localises to the cytoplasm. Functionally, specifically methylates the N7 position of guanine in position 535 of 16S rRNA. This Lysinibacillus sphaericus (strain C3-41) protein is Ribosomal RNA small subunit methyltransferase G.